The sequence spans 400 residues: 1-deoxy-D-xylulose 5-phosphate reductoisomerase (400 aa).

Positions 17, 18, 19, 20, and 131 each coordinate NADPH. K132 provides a ligand contact to 1-deoxy-D-xylulose 5-phosphate. An NADPH-binding site is contributed by E133. Mn(2+) is bound at residue D157. 1-deoxy-D-xylulose 5-phosphate is bound by residues S158, E159, S188, and H211. E159 is a binding site for Mn(2+). Position 217 (G217) interacts with NADPH. Residues S224, N229, K230, and E233 each coordinate 1-deoxy-D-xylulose 5-phosphate. Residue E233 coordinates Mn(2+).

It belongs to the DXR family. Requires Mg(2+) as cofactor. Mn(2+) is required as a cofactor.

The catalysed reaction is 2-C-methyl-D-erythritol 4-phosphate + NADP(+) = 1-deoxy-D-xylulose 5-phosphate + NADPH + H(+). It functions in the pathway isoprenoid biosynthesis; isopentenyl diphosphate biosynthesis via DXP pathway; isopentenyl diphosphate from 1-deoxy-D-xylulose 5-phosphate: step 1/6. In terms of biological role, catalyzes the NADPH-dependent rearrangement and reduction of 1-deoxy-D-xylulose-5-phosphate (DXP) to 2-C-methyl-D-erythritol 4-phosphate (MEP). The polypeptide is 1-deoxy-D-xylulose 5-phosphate reductoisomerase (Pseudomonas putida (strain ATCC 700007 / DSM 6899 / JCM 31910 / BCRC 17059 / LMG 24140 / F1)).